Consider the following 156-residue polypeptide: ATP synthase subunit b (156 aa).

A helical membrane pass occupies residues 7-27 (LIGQLIAFAIFVAFCMKFVWP).

The protein belongs to the ATPase B chain family. In terms of assembly, F-type ATPases have 2 components, F(1) - the catalytic core - and F(0) - the membrane proton channel. F(1) has five subunits: alpha(3), beta(3), gamma(1), delta(1), epsilon(1). F(0) has three main subunits: a(1), b(2) and c(10-14). The alpha and beta chains form an alternating ring which encloses part of the gamma chain. F(1) is attached to F(0) by a central stalk formed by the gamma and epsilon chains, while a peripheral stalk is formed by the delta and b chains.

The protein localises to the cell inner membrane. Functionally, f(1)F(0) ATP synthase produces ATP from ADP in the presence of a proton or sodium gradient. F-type ATPases consist of two structural domains, F(1) containing the extramembraneous catalytic core and F(0) containing the membrane proton channel, linked together by a central stalk and a peripheral stalk. During catalysis, ATP synthesis in the catalytic domain of F(1) is coupled via a rotary mechanism of the central stalk subunits to proton translocation. Component of the F(0) channel, it forms part of the peripheral stalk, linking F(1) to F(0). The chain is ATP synthase subunit b from Pasteurella multocida (strain Pm70).